Consider the following 500-residue polypeptide: MNSFPWLTIIVVLPIFAGSSIFFFPHRGNKVIRWYTICICLLELLLTTYAFCYHFQLDDPLVQLEQDYKWINIFDFHWRLGIDGLSIGPVLLTGFITTLATLAAWPVTRDSRLFHFLMLAMYSGQIGSFSSRDLLLFFIMWELELIPVYLLLSMWGGKKRLYSATKFILYTAGGSIFLLIGVSGMGLYGSNEPTLNFETSANQSYPVALEILLYFGFFIAYAVKLPIIPLHTWLPDTHGEAHYSTCMLLAGILLKMGAYGLVRINMELLPHAHSIFSPWLMIVGTIQIIYAASTSLGQRNLKKRIAYSSVSHMGFTILGISSITDTGLNGAILQMISHGFIGAALFFLAGTSYDRIRLVYLDEMGGIAIPMPKIFTLFSSFSMASLALPGMSGFVAELVVFFGIITSEKFFLMPKILITFVTAIGMILTPIYSLSMLRQIFYGYKQFNVPNSHFFDSGPRELFVSICIFLPVIGIGIYPDFVFSLSVDKVEAILSNYFYR.

14 helical membrane-spanning segments follow: residues 4–24 (FPWL…IFFF), 35–55 (YTIC…CYHF), 87–107 (IGPV…AWPV), 113–130 (LFHF…GSFS), 134–154 (LLLF…LLSM), 167–187 (FILY…GMGL), 208–228 (ALEI…LPII), 242–262 (HYST…YGLV), 272–292 (AHSI…IYAA), 305–325 (IAYS…SITD), 330–350 (GAIL…FLAG), 386–406 (LALP…GIIT), 416–436 (ILIT…SLSM), and 463–483 (FVSI…DFVF).

This sequence belongs to the complex I subunit 4 family.

Its subcellular location is the plastid. The protein localises to the chloroplast thylakoid membrane. The catalysed reaction is a plastoquinone + NADH + (n+1) H(+)(in) = a plastoquinol + NAD(+) + n H(+)(out). The enzyme catalyses a plastoquinone + NADPH + (n+1) H(+)(in) = a plastoquinol + NADP(+) + n H(+)(out). This is NAD(P)H-quinone oxidoreductase chain 4, chloroplastic from Nandina domestica (Heavenly bamboo).